The sequence spans 511 residues: E3 ubiquitin-protein ligase TRIM7 (511 aa).

An RING-type zinc finger spans residues 29 to 82 (CSICLELFREPVSVECGHSFCRACIGRCWERPGAGSVGAATRAPPFPLPCPQCR). Ser107 carries the phosphoserine; by RPS6KA5 modification. The B box-type zinc finger occupies 125–166 (AAAARCGQHGEPFKLYCQDDGRAICVVCDRAREHREHAVLPL). Residues Cys130, His133, Cys152, and His158 each contribute to the Zn(2+) site. The stretch at 166 to 263 (LDEAVQEAKE…AQLGVEITQL (98 aa)) forms a coiled coil. One can recognise a B30.2/SPRY domain in the interval 324 to 511 (MLKKFKEDLR…STGTYLRIWP (188 aa)).

It belongs to the TRIM/RBCC family. As to quaternary structure, forms homodimers. Interacts with GNIP2. Interacts with GYG1. Interacts with RNF187 (via C-terminus). In terms of processing, phosphorylated at Ser-107 by RPS6KA5/MSK1, which stimulates the ubiquitin ligase activity. Post-translationally, auto-ubiquitinates via 'Lys-63'-linked polyubiquitination. As to expression, skeletal muscle and placenta, at lower levels in heart, brain and pancreas. Isoform 1 is widely expressed with high level in testis, kidney and heart.

Its subcellular location is the nucleus. The protein resides in the cytoplasm. The protein localises to the golgi apparatus. It catalyses the reaction S-ubiquitinyl-[E2 ubiquitin-conjugating enzyme]-L-cysteine + [acceptor protein]-L-lysine = [E2 ubiquitin-conjugating enzyme]-L-cysteine + N(6)-ubiquitinyl-[acceptor protein]-L-lysine.. Its pathway is protein modification; protein ubiquitination. Its function is as follows. E3 ubiquitin-protein ligase that have both tumor-promoting and tumor-suppressing activities and functions in several biological processes including innate immunity, regulation of ferroptosis as well as cell proliferation and migration. Acts as an antiviral effector against multiple viruses by targeting specific viral proteins for ubiquitination and degradation including norovirus NTPase protein or SARS-CoV-2 NSP5 and NSP8 proteins. Mechanistically, recognizes the C-terminal glutamine-containing motif usually generated by viral proteases that process the polyproteins and trigger their ubiquitination and subsequent degradation. Mediates 'Lys-63'-linked polyubiquitination and stabilization of the JUN coactivator RNF187 in response to growth factor signaling via the MEK/ERK pathway, thereby regulating JUN transactivation and cellular proliferation. Promotes the TLR4-mediated signaling activation through its E3 ligase domain leading to production of pro-inflammatory cytokines and type I interferon. Also plays a negative role in the regulation of exogenous cytosolic DNA virus-triggered immune response. Mechanistically, enhances the 'Lys-48'-linked ubiquitination of STING1 leading to its proteasome-dependent degradation. Mediates the ubiquitination of the SIN3-HDAC chromatin remodeling complex component BRMS1. Modulates NCOA4-mediated ferritinophagy and ferroptosis in glioblastoma cells by ubiquitinating NCOA4, leading to its degradation. Functionally, (Microbial infection) Promotes Zika virus replication by mediating envelope protein E ubiquitination. This is E3 ubiquitin-protein ligase TRIM7 (TRIM7) from Homo sapiens (Human).